We begin with the raw amino-acid sequence, 533 residues long: MTQAEIKLCSLLLQEHFGEIVEKIGVHLVRTGSQPLRVIAHDTKASLDQVKKALCVLIHHNLVLYHVHKRGVVEYEAQCSRVLRMLRYPRYIYTTKTLYGDTGELIVEELLLNGKMTMSAVVKKVADRLTETMEDGKTMDYAEVSNAFVRLADTHFVQRCPLVPDTDSSDRGPPPPAPTLVINEKDMYLVPKLSLIGKGKRRRSSDEDATGEPKAKKPRYTDNKEPSPDDGIYWQVNLDRFHQHFRDQAIVSAVANRMDQTSSEIVRTMLRMSEITTPSSAPYTQPLSSNEIFRSLPVGYNISKQVLDQYLTLLADDPLEFIGKSGDSGGGMFVINLHKALASLATATLESVIQERFGSRCARIFRLVLQKKHLEQKQVEDFAMIPAKEAKDMLYKMLSENFILLQEIPKTPDHAPSRTFYLYTVNVLSAARMLLHRCYKSIANLIERRQFETKENKRLLEKSQRVEAIMASMQATGAEEVQLQEIEEMITAPERQQLETLKRNVNKLDASEIQVDETIFLLESYIESTMKRQ.

The segment at 162-181 (LVPDTDSSDRGPPPPAPTLV) is disordered. Serine 194 is subject to Phosphoserine. Positions 197 to 228 (GKGKRRRSSDEDATGEPKAKKPRYTDNKEPSP) are disordered. The segment covering 211 to 227 (GEPKAKKPRYTDNKEPS) has biased composition (basic and acidic residues).

This sequence belongs to the eukaryotic RPC3/POLR3C RNA polymerase subunit family. In terms of assembly, component of the RNA polymerase III complex consisting of 17 subunits: a ten-subunit horseshoe-shaped catalytic core composed of POLR3A/RPC1, POLR3B/RPC2, POLR1C/RPAC1, POLR1D/RPAC2, POLR3K/RPC10, POLR2E/RPABC1, POLR2F/RPABC2, POLR2H/RPABC3, POLR2K/RPABC4 and POLR2L/RPABC5; a mobile stalk composed of two subunits POLR3H/RPC8 and CRCP/RPC9, protruding from the core and functioning primarily in transcription initiation; and additional subunits homologous to general transcription factors of the RNA polymerase II machinery, POLR3C/RPC3-POLR3F/RPC6-POLR3G/RPC7 heterotrimer required for transcription initiation and POLR3D/RPC4-POLR3E/RPC5 heterodimer involved in both transcription initiation and termination. Directly interacts with POLR3G/RPC7 and POLR3GL. Directly interacts with POLR3F/RPC6. Interacts with GTF3C4. As part of the RNA polymerase III complex, interacts with PKP2.

The protein resides in the nucleus. Functionally, DNA-dependent RNA polymerase catalyzes the transcription of DNA into RNA using the four ribonucleoside triphosphates as substrates. Specific peripheric component of RNA polymerase III (Pol III) which synthesizes small non-coding RNAs including 5S rRNA, snRNAs, tRNAs and miRNAs from at least 500 distinct genomic loci. Part of POLR3C/RPC3-POLR3F/RPC6-POLR3G/RPC7 heterotrimer, coordinates the dynamics of Pol III stalk and clamp modules during the transition from apo to elongation state. Pol III plays a key role in sensing and limiting infection by intracellular bacteria and DNA viruses. Acts as a nuclear and cytosolic DNA sensor involved in innate immune response. Can sense non-self dsDNA that serves as template for transcription into dsRNA. The non-self RNA polymerase III transcripts, such as Epstein-Barr virus-encoded RNAs (EBERs) induce type I interferon and NF-kappa-B through the RIG-I pathway. Preferentially binds single-stranded DNA (ssDNA) in a sequence-independent manner. The chain is DNA-directed RNA polymerase III subunit RPC3 from Mus musculus (Mouse).